We begin with the raw amino-acid sequence, 201 residues long: Probable quinol oxidase subunit 3 (201 aa).

A run of 5 helical transmembrane segments spans residues 20-40 (LGFW…FATL), 62-82 (LILI…IAIY), 91-111 (LMMF…GFEI), 133-153 (FFIL…WVIC), and 172-192 (FIVS…FTAV).

Belongs to the cytochrome c oxidase subunit 3 family.

The protein localises to the cell membrane. It carries out the reaction 2 a quinol + O2 = 2 a quinone + 2 H2O. In terms of biological role, catalyzes quinol oxidation with the concomitant reduction of oxygen to water. This Staphylococcus epidermidis (strain ATCC 35984 / DSM 28319 / BCRC 17069 / CCUG 31568 / BM 3577 / RP62A) protein is Probable quinol oxidase subunit 3 (qoxC).